Reading from the N-terminus, the 125-residue chain is Ly6/PLAUR domain-containing protein 2 (125 aa).

Residues 1–22 (MRGTRLALLALVLAACGELAPA) form the signal peptide. The 76-residue stretch at 25 to 100 (CYVCPEPTGV…VSCCNTELCN (76 aa)) folds into the UPAR/Ly6 domain. The N-linked (GlcNAc...) asparagine glycan is linked to N46. G103 carries GPI-anchor amidated glycine lipidation. The propeptide at 104-125 (APALNSLHCGALTLLPLLSLRL) is removed in mature form.

It localises to the cell membrane. In Homo sapiens (Human), this protein is Ly6/PLAUR domain-containing protein 2 (LYPD2).